The following is a 410-amino-acid chain: Peptidase T (410 aa).

Histidine 79 is a Zn(2+) binding site. The active site involves aspartate 81. Residue aspartate 142 coordinates Zn(2+). Glutamate 176 acts as the Proton acceptor in catalysis. Positions 177, 199, and 381 each coordinate Zn(2+).

The protein belongs to the peptidase M20B family. Zn(2+) serves as cofactor.

It is found in the cytoplasm. It carries out the reaction Release of the N-terminal residue from a tripeptide.. Cleaves the N-terminal amino acid of tripeptides. The protein is Peptidase T of Listeria monocytogenes serotype 4b (strain F2365).